Here is a 139-residue protein sequence, read N- to C-terminus: Holo-[acyl-carrier-protein] synthase (139 aa).

Residues D8 and E57 each coordinate Mg(2+).

This sequence belongs to the P-Pant transferase superfamily. AcpS family. Requires Mg(2+) as cofactor.

It is found in the cytoplasm. It catalyses the reaction apo-[ACP] + CoA = holo-[ACP] + adenosine 3',5'-bisphosphate + H(+). Functionally, transfers the 4'-phosphopantetheine moiety from coenzyme A to a Ser of acyl-carrier-protein. The sequence is that of Holo-[acyl-carrier-protein] synthase from Dinoroseobacter shibae (strain DSM 16493 / NCIMB 14021 / DFL 12).